A 221-amino-acid chain; its full sequence is GTP-binding nuclear protein Ran/TC4 (221 aa).

The 165-residue stretch at 10–174 folds into the Small GTPase Ran-type domain; the sequence is DYPSFKLVIV…LYLARKLAGD (165 aa). 21–28 is a binding site for GTP; the sequence is DGGTGKTT. Positions 40 to 48 are switch-I; that stretch reads KKYEPTIGV. Residues Gly-71, 125–128, and 153–155 contribute to the GTP site; these read NKVD and SAK. Residues 71–87 are switch-II; that stretch reads GQEKFGGLRDGYYIHGQ.

It belongs to the small GTPase superfamily. Ran family. In terms of assembly, found in a nuclear export complex with RanGTP, exportin and pre-miRNA.

Its subcellular location is the nucleus. Functionally, GTP-binding protein involved in nucleocytoplasmic transport. Required for the import of protein into the nucleus and also for RNA export. Involved in chromatin condensation and control of cell cycle. The chain is GTP-binding nuclear protein Ran/TC4 from Vicia faba (Broad bean).